A 269-amino-acid chain; its full sequence is Hydroxypyruvate/pyruvate aldolase (269 aa).

His48 acts as the Proton acceptor in catalysis. A divalent metal cation contacts are provided by Glu152 and Asp178.

It belongs to the HpcH/HpaI aldolase family. A divalent metal cation is required as a cofactor.

It carries out the reaction D-glyceraldehyde + pyruvate = 2-dehydro-3-deoxy-L-galactonate. Its function is as follows. Aldolase which can catalyze in vitro the aldolisation reaction between hydroxypyruvate (HPA) or pyruvate (PA) and D-glyceraldehyde (D-GA). The condensation of pyruvate and D-glyceraldehyde produces 2-dehydro-3-deoxy-L-galactonate as the major product. Has weak activity with hydroxypyruvate and D-glyceraldehyde. This chain is Hydroxypyruvate/pyruvate aldolase, found in Delftia acidovorans (strain DSM 14801 / SPH-1).